The sequence spans 126 residues: MARIAGIDIPSDKRVVIALTYIYGLGNKLSHKILNELKIDQNIRVKNLTEQQLSALRIEITKYNVEGDLRREVTLNIKRLMEIGAYRGLRHRKGLPVRGQKTRNNAHTVKGKPKAAIAGKKKNKVN.

The segment at 94 to 126 (GLPVRGQKTRNNAHTVKGKPKAAIAGKKKNKVN) is disordered. The segment covering 109–126 (VKGKPKAAIAGKKKNKVN) has biased composition (basic residues).

Belongs to the universal ribosomal protein uS13 family. As to quaternary structure, part of the 30S ribosomal subunit. Forms a loose heterodimer with protein S19. Forms two bridges to the 50S subunit in the 70S ribosome.

Its function is as follows. Located at the top of the head of the 30S subunit, it contacts several helices of the 16S rRNA. In the 70S ribosome it contacts the 23S rRNA (bridge B1a) and protein L5 of the 50S subunit (bridge B1b), connecting the 2 subunits; these bridges are implicated in subunit movement. Contacts the tRNAs in the A and P-sites. The sequence is that of Small ribosomal subunit protein uS13 from Aster yellows witches'-broom phytoplasma (strain AYWB).